Reading from the N-terminus, the 212-residue chain is Urease accessory protein UreG 2 (212 aa).

11-18 provides a ligand contact to GTP; sequence GPVGSGKT.

It belongs to the SIMIBI class G3E GTPase family. UreG subfamily. Homodimer. UreD, UreF and UreG form a complex that acts as a GTP-hydrolysis-dependent molecular chaperone, activating the urease apoprotein by helping to assemble the nickel containing metallocenter of UreC. The UreE protein probably delivers the nickel.

It localises to the cytoplasm. In terms of biological role, facilitates the functional incorporation of the urease nickel metallocenter. This process requires GTP hydrolysis, probably effectuated by UreG. The sequence is that of Urease accessory protein UreG 2 from Brucella abortus (strain 2308).